Consider the following 441-residue polypeptide: Zinc finger and BTB domain-containing protein 8A (441 aa).

Positions 24-92 constitute a BTB domain; that stretch reads CDCSILVEGK…VYSGKLSLTG (69 aa). Polar residues-rich tracts occupy residues 143–170 and 178–196; these read NGVERSSFYSGGWQEGSSSPRSHLSPEQ and KSWNKYNYHPASQKNTQQP. The interval 143 to 251 is disordered; that stretch reads NGVERSSFYS…QSEEQAQIDA (109 aa). Serine 161 and serine 167 each carry phosphoserine. Glycyl lysine isopeptide (Lys-Gly) (interchain with G-Cter in SUMO2) cross-links involve residues lysine 178, lysine 182, lysine 191, and lysine 199. Positions 198–208 are enriched in basic and acidic residues; that stretch reads AKHEPRKESIK. Positions 234-243 are enriched in low complexity; the sequence is SDSSSHVSQS. C2H2-type zinc fingers lie at residues 282-304 and 310-333; these read FKCPYCTHVVKRKADLKRHLRCH and YPCQACGKRFSRLDHLSSHFRTIH. Lysine 437 is covalently cross-linked (Glycyl lysine isopeptide (Lys-Gly) (interchain with G-Cter in SUMO2)).

The protein resides in the nucleus. In terms of biological role, may be involved in transcriptional regulation. The protein is Zinc finger and BTB domain-containing protein 8A (ZBTB8A) of Homo sapiens (Human).